The chain runs to 413 residues: RNA-binding protein 41 (413 aa).

Positions 223-235 (SVGDSGTAESPSL) are enriched in polar residues. Positions 223-247 (SVGDSGTAESPSLLQDKGKQAAQGK) are disordered. Ser-232 bears the Phosphoserine mark. The 79-residue stretch at 309 to 387 (KVLYLKNLSP…KILVIEFGKN (79 aa)) folds into the RRM domain.

Its function is as follows. May bind RNA. The chain is RNA-binding protein 41 (RBM41) from Homo sapiens (Human).